Here is a 338-residue protein sequence, read N- to C-terminus: Glycerol-3-phosphate dehydrogenase [NAD(P)+] (338 aa).

NADPH-binding residues include serine 13, tryptophan 14, and lysine 108. Positions 108, 139, and 141 each coordinate sn-glycerol 3-phosphate. Residue alanine 143 coordinates NADPH. Sn-glycerol 3-phosphate contacts are provided by lysine 194, aspartate 247, serine 257, arginine 258, and asparagine 259. Lysine 194 serves as the catalytic Proton acceptor. Arginine 258 contributes to the NADPH binding site. NADPH is bound by residues valine 282 and glutamate 284.

This sequence belongs to the NAD-dependent glycerol-3-phosphate dehydrogenase family.

The protein resides in the cytoplasm. The catalysed reaction is sn-glycerol 3-phosphate + NAD(+) = dihydroxyacetone phosphate + NADH + H(+). It catalyses the reaction sn-glycerol 3-phosphate + NADP(+) = dihydroxyacetone phosphate + NADPH + H(+). The protein operates within membrane lipid metabolism; glycerophospholipid metabolism. Catalyzes the reduction of the glycolytic intermediate dihydroxyacetone phosphate (DHAP) to sn-glycerol 3-phosphate (G3P), the key precursor for phospholipid synthesis. The protein is Glycerol-3-phosphate dehydrogenase [NAD(P)+] of Streptococcus pyogenes serotype M28 (strain MGAS6180).